The following is a 356-amino-acid chain: C-C chemokine receptor type 8 (356 aa).

Residues Met1–Lys35 lie on the Extracellular side of the membrane. Residues Leu36 to Cys63 form a helical membrane-spanning segment. The Cytoplasmic portion of the chain corresponds to Lys64–Tyr73. The chain crosses the membrane as a helical span at residues Leu74–Tyr93. Over Tyr94–Lys107 the chain is Extracellular. A disulfide bridge connects residues Cys106 and Cys184. A helical membrane pass occupies residues Val108–Val129. Residues Asp130 to Thr146 are Cytoplasmic-facing. The helical transmembrane segment at Ile147–Phe172 threads the bilayer. The Extracellular portion of the chain corresponds to Tyr173–Met203. The helical transmembrane segment at Asn204–Leu223 threads the bilayer. Residues His224 to Arg239 are Cytoplasmic-facing. A helical transmembrane segment spans residues Leu240–Leu264. The Extracellular portion of the chain corresponds to His265–Tyr281. Residues Ala282–Gly305 traverse the membrane as a helical segment. Over Glu306 to Leu356 the chain is Cytoplasmic.

Belongs to the G-protein coupled receptor 1 family.

The protein resides in the cell membrane. Functionally, receptor for the chemokines CCL1/SCYA1/I-309. May regulate monocyte chemotaxis and thymic cell line apoptosis. This Macaca mulatta (Rhesus macaque) protein is C-C chemokine receptor type 8 (CCR8).